We begin with the raw amino-acid sequence, 139 residues long: D-ribose pyranase (139 aa).

His-20 (proton donor) is an active-site residue. Residues Asp-28, His-106, and 128–130 (YAN) each bind substrate.

It belongs to the RbsD / FucU family. RbsD subfamily. Homodecamer.

Its subcellular location is the cytoplasm. It carries out the reaction beta-D-ribopyranose = beta-D-ribofuranose. It participates in carbohydrate metabolism; D-ribose degradation; D-ribose 5-phosphate from beta-D-ribopyranose: step 1/2. Functionally, catalyzes the interconversion of beta-pyran and beta-furan forms of D-ribose. The chain is D-ribose pyranase from Shewanella halifaxensis (strain HAW-EB4).